Here is a 720-residue protein sequence, read N- to C-terminus: Polyribonucleotide nucleotidyltransferase (720 aa).

Asp-486 and Asp-492 together coordinate Mg(2+). Positions 553–612 constitute a KH domain; the sequence is PRITVINVPKEKIREVIGTGGKVIREIVEFSGAKIDIEDDGTIKIASTSEESTQKAIDRI. One can recognise an S1 motif domain in the interval 622–690; sequence GKIYNGKVVK…DRGKVKLSMR (69 aa). The tract at residues 698–720 is disordered; that stretch reads EDISDKVGPKGGRGGRGEGDLAE.

This sequence belongs to the polyribonucleotide nucleotidyltransferase family. It depends on Mg(2+) as a cofactor.

Its subcellular location is the cytoplasm. It carries out the reaction RNA(n+1) + phosphate = RNA(n) + a ribonucleoside 5'-diphosphate. In terms of biological role, involved in mRNA degradation. Catalyzes the phosphorolysis of single-stranded polyribonucleotides processively in the 3'- to 5'-direction. The chain is Polyribonucleotide nucleotidyltransferase from Granulibacter bethesdensis (strain ATCC BAA-1260 / CGDNIH1).